The following is an 819-amino-acid chain: Lysine-specific demethylase JMJ18 (819 aa).

Residues Met-1–His-39 form a disordered region. Positions Ser-8–Ile-30 are enriched in basic and acidic residues. Residues Ala-59 to Pro-100 form the JmjN domain. The interval Thr-120–Phe-171 is disordered. A Nuclear localization signal motif is present at residues Met-130–Arg-137. Over residues Met-130 to Ser-154 the composition is skewed to basic residues. The span at Gly-155 to Pro-165 shows a compositional bias: low complexity. Residues Gln-261–Ser-427 form the JmjC domain. His-307, Glu-309, and His-395 together coordinate Fe cation. Zn(2+) contacts are provided by Cys-519, Cys-522, Cys-533, Cys-535, Cys-542, His-545, Cys-550, and Cys-552. A C5HC2 zinc finger spans residues Cys-519–Leu-571. Positions Ala-644–Ala-702 constitute an FYR N-terminal domain. Positions Leu-704–Lys-788 constitute an FYR C-terminal domain.

Belongs to the JARID1 histone demethylase family. Requires Fe(2+) as cofactor. As to expression, expressed in vascular tissues of roots, cotyledons, leaves and flowers. Expressed predominantly in phloem companion cells of roots. Present in inflorescences, roots, siliques, leaves and stems.

It localises to the nucleus. It carries out the reaction N(6),N(6),N(6)-trimethyl-L-lysyl(4)-[histone H3] + 2-oxoglutarate + O2 = N(6),N(6)-dimethyl-L-lysyl(4)-[histone H3] + formaldehyde + succinate + CO2. The catalysed reaction is N(6),N(6)-dimethyl-L-lysyl(4)-[histone H3] + 2-oxoglutarate + O2 = N(6)-methyl-L-lysyl(4)-[histone H3] + formaldehyde + succinate + CO2. In terms of biological role, histone demethylase that demethylates 'Lys-4' (H3K4me) of histone H3 with a specific activity for H3K4me3 and H3K4me2. No activity on H3K9me3/2, H3K27me3/2 and H3K36me3/2. Involved in the control of flowering time by demethylating H3K4me3 at the FLC locus and repressing its expression. The repression of FLC level and reduction in H3K4me3 at the FLC locus results in induction of the flowering activator FT, which is a downstream target of FLC. The polypeptide is Lysine-specific demethylase JMJ18 (Arabidopsis thaliana (Mouse-ear cress)).